Reading from the N-terminus, the 868-residue chain is Leucine--tRNA ligase (868 aa).

The 'HIGH' region signature appears at 42–52; sequence PYPSGKLHMGH. The 'KMSKS' region motif lies at 627 to 631; sequence KMSKS. An ATP-binding site is contributed by Lys-630.

Belongs to the class-I aminoacyl-tRNA synthetase family.

The protein resides in the cytoplasm. It catalyses the reaction tRNA(Leu) + L-leucine + ATP = L-leucyl-tRNA(Leu) + AMP + diphosphate. The protein is Leucine--tRNA ligase of Pseudomonas putida (strain ATCC 700007 / DSM 6899 / JCM 31910 / BCRC 17059 / LMG 24140 / F1).